The following is a 555-amino-acid chain: Synaptotagmin-14 (555 aa).

The Extracellular portion of the chain corresponds to 1 to 24; it reads MAIEGGERTCGVHELICIRKVSPE. The chain crosses the membrane as a helical; Signal-anchor for type III membrane protein span at residues 25–47; the sequence is AVGFLSAVGVFIVLMLLLFLYIN. Residues 48–555 are Cytoplasmic-facing; that stretch reads KKFCFENVGG…VCRWHALLES (508 aa). Disordered regions lie at residues 76–97, 157–179, and 205–258; these read YNSY…EALG, TPPL…HLSC, and CPSE…PEPE. Basic and acidic residues predominate over residues 211 to 224; that stretch reads TGHEAESYHNKGYE. C2 domains lie at 260–379 and 415–550; these read KYGT…SLPV and SVPE…CRWH.

It belongs to the synaptotagmin family. Homodimer. Can also form heterodimers. As to expression, expressed in heart and testis. Expressed in brain (especially in the cerebellum).

It localises to the membrane. Functionally, may be involved in the trafficking and exocytosis of secretory vesicles in non-neuronal tissues. Is Ca(2+)-independent. This is Synaptotagmin-14 (Syt14) from Mus musculus (Mouse).